Here is an 878-residue protein sequence, read N- to C-terminus: Alanine--tRNA ligase (878 aa).

4 residues coordinate Zn(2+): H564, H568, C666, and H670.

This sequence belongs to the class-II aminoacyl-tRNA synthetase family. In terms of assembly, homotetramer. Zn(2+) is required as a cofactor.

The protein localises to the cytoplasm. It catalyses the reaction tRNA(Ala) + L-alanine + ATP = L-alanyl-tRNA(Ala) + AMP + diphosphate. Its function is as follows. Catalyzes the attachment of alanine to tRNA(Ala) in a two-step reaction: alanine is first activated by ATP to form Ala-AMP and then transferred to the acceptor end of tRNA(Ala). Also edits incorrectly charged Ser-tRNA(Ala) and Gly-tRNA(Ala) via its editing domain. This chain is Alanine--tRNA ligase, found in Buchnera aphidicola subsp. Acyrthosiphon pisum (strain APS) (Acyrthosiphon pisum symbiotic bacterium).